We begin with the raw amino-acid sequence, 168 residues long: Photosystem I assembly protein Ycf3 (168 aa).

3 TPR repeats span residues 35–68, 72–105, and 120–153; these read AFTY…EIDP, SYIL…NPFL, and GEQA…TPGN.

The protein belongs to the Ycf3 family.

Its subcellular location is the plastid. The protein resides in the chloroplast thylakoid membrane. Essential for the assembly of the photosystem I (PSI) complex. May act as a chaperone-like factor to guide the assembly of the PSI subunits. The chain is Photosystem I assembly protein Ycf3 from Populus alba (White poplar).